Here is a 185-residue protein sequence, read N- to C-terminus: Ribosome-recycling factor (185 aa).

Belongs to the RRF family.

It localises to the cytoplasm. Responsible for the release of ribosomes from messenger RNA at the termination of protein biosynthesis. May increase the efficiency of translation by recycling ribosomes from one round of translation to another. In Syntrophobacter fumaroxidans (strain DSM 10017 / MPOB), this protein is Ribosome-recycling factor.